A 714-amino-acid chain; its full sequence is Polyribonucleotide nucleotidyltransferase (714 aa).

Mg(2+) is bound by residues D488 and D494. The region spanning P555–I614 is the KH domain. The region spanning G624–K692 is the S1 motif domain.

It belongs to the polyribonucleotide nucleotidyltransferase family. The cofactor is Mg(2+).

The protein localises to the cytoplasm. The catalysed reaction is RNA(n+1) + phosphate = RNA(n) + a ribonucleoside 5'-diphosphate. Its function is as follows. Involved in mRNA degradation. Catalyzes the phosphorolysis of single-stranded polyribonucleotides processively in the 3'- to 5'-direction. The sequence is that of Polyribonucleotide nucleotidyltransferase from Brucella ovis (strain ATCC 25840 / 63/290 / NCTC 10512).